The primary structure comprises 88 residues: MYNPKEHFSMSRIAKGLALTSVAAAAVAGTAGVAAADSGAQAAAAHSPGVLSGNVVQVPVHIPVNVCGNTIDVIGLLNPAFGNECEND.

Positions 1 to 36 (MYNPKEHFSMSRIAKGLALTSVAAAAVAGTAGVAAA) are cleaved as a signal peptide. The Chaplin domain maps to 47–87 (SPGVLSGNVVQVPVHIPVNVCGNTIDVIGLLNPAFGNECEN). The cysteines at positions 67 and 85 are disulfide-linked.

It belongs to the chaplin family. Short chaplin subfamily. Homodimer; disulfide linked. About 20% of ChpF isolated from cell wall forms disulfide-bonded homodimers.

Its subcellular location is the cell surface. The protein resides in the secreted. The protein localises to the cell wall. It is found in the fimbrium. One of 8 partially redundant surface-active proteins required for efficient formation of aerial mycelium; the short chaplins assemble into a hydrophobic, amyloidal fibrillar surface layer that envelopes and protects aerial hyphae and spores, presumably anchored to the long chaplins. Chaplins have an overlapping function with the surface-active SapB peptide; chaplins are essential on minimal medium while on rich medium both chaplins and SapB are required for efficient aerial hyphae formation. Chaplins are also involved in cell attachment to a hydrophobic surface. Forms amyloid fibrils in vitro probably composed of stacked beta-sheets, at low extracellular concentrations individually restores the ability to form aerial hyphae to a chaplin-deficient strain. A small chaplin extract (ChpD, ChpE, ChpF, ChpG and ChpH) self-assembles into 2 different amyloids; small fibrils at the air-water interface form an amphipathic membrane that resembles spore-surface structures involved in aerial hyphae formation, and hydrophilic fibrils in solution that resemble the fibers that attach cells to a hydrophobic surface. At the air-water interface the hydrophilic surface is in contact with water (probably equivalent to the peptidoglycan layer), while the hydrophobic face is exposed to the air, making the surface of the aerial hyphae hydrophobic. A small chaplin extract applied to a chaplin-deficient strain restores aerial hyphae formation. The small chaplin extract forms an amyloid-like structure similar to that seen on the surface of cells without rodlets (rdlA-rdlB deletions), and is highly surface active, reducing surface tension from 72 to 26 mJ/m(2), which probably allows escape of hyphae from an aqueous environment into air. ChpF alone is less surface active at pH 3.0 than at pH 10.0, it reduces the surface tension of water from 72.8 mN/m to 50 mN/m at pH 3.0 or to 37 mN/m at pH 10.0. ChpF and ChpG are sufficient to restore the rodlet layer and hydrophobicity to a strain deleted for the other 6 chaplin genes. The protein is Chaplin-F of Streptomyces coelicolor (strain ATCC BAA-471 / A3(2) / M145).